The chain runs to 156 residues: Small ribosomal subunit protein uS7 (156 aa).

The protein belongs to the universal ribosomal protein uS7 family. In terms of assembly, part of the 30S ribosomal subunit. Contacts proteins S9 and S11.

One of the primary rRNA binding proteins, it binds directly to 16S rRNA where it nucleates assembly of the head domain of the 30S subunit. Is located at the subunit interface close to the decoding center, probably blocks exit of the E-site tRNA. The chain is Small ribosomal subunit protein uS7 from Laribacter hongkongensis (strain HLHK9).